A 393-amino-acid chain; its full sequence is NAD(P)H-quinone oxidoreductase subunit H, chloroplastic (393 aa).

The protein belongs to the complex I 49 kDa subunit family. As to quaternary structure, NDH is composed of at least 16 different subunits, 5 of which are encoded in the nucleus.

It localises to the plastid. Its subcellular location is the chloroplast thylakoid membrane. It catalyses the reaction a plastoquinone + NADH + (n+1) H(+)(in) = a plastoquinol + NAD(+) + n H(+)(out). The catalysed reaction is a plastoquinone + NADPH + (n+1) H(+)(in) = a plastoquinol + NADP(+) + n H(+)(out). Its function is as follows. NDH shuttles electrons from NAD(P)H:plastoquinone, via FMN and iron-sulfur (Fe-S) centers, to quinones in the photosynthetic chain and possibly in a chloroplast respiratory chain. The immediate electron acceptor for the enzyme in this species is believed to be plastoquinone. Couples the redox reaction to proton translocation, and thus conserves the redox energy in a proton gradient. This chain is NAD(P)H-quinone oxidoreductase subunit H, chloroplastic, found in Liriodendron tulipifera (Tuliptree).